Here is a 208-residue protein sequence, read N- to C-terminus: Small ribosomal subunit protein uS4 (208 aa).

The region spanning 95–161 (MRLDALVLRA…VPLQVAAAGA (67 aa)) is the S4 RNA-binding domain.

The protein belongs to the universal ribosomal protein uS4 family. In terms of assembly, part of the 30S ribosomal subunit. Contacts protein S5. The interaction surface between S4 and S5 is involved in control of translational fidelity.

In terms of biological role, one of the primary rRNA binding proteins, it binds directly to 16S rRNA where it nucleates assembly of the body of the 30S subunit. Its function is as follows. With S5 and S12 plays an important role in translational accuracy. The polypeptide is Small ribosomal subunit protein uS4 (Pseudarthrobacter chlorophenolicus (strain ATCC 700700 / DSM 12829 / CIP 107037 / JCM 12360 / KCTC 9906 / NCIMB 13794 / A6) (Arthrobacter chlorophenolicus)).